The following is an 85-amino-acid chain: Large ribosomal subunit protein bL27 (85 aa).

The tract at residues 1-21 (MAHKKAGGSTRNGRDSEGKRL) is disordered.

Belongs to the bacterial ribosomal protein bL27 family.

This chain is Large ribosomal subunit protein bL27, found in Hamiltonella defensa subsp. Acyrthosiphon pisum (strain 5AT).